Here is a 162-residue protein sequence, read N- to C-terminus: Translocator protein 2 (162 aa).

5 helical membrane passes run 3–23 (LQGP…CMLI), 44–64 (VILL…YLVW), 79–99 (LGLY…FLAA), 103–123 (GLAL…VFIW), and 129–149 (LAAL…AITY).

It belongs to the TspO/BZRP family. As to quaternary structure, homotetramer. May also form homodimer. As to expression, expressed in liver, bone marrow and spleen. In spleen, detected in red pulp but not in white pulp.

It is found in the endoplasmic reticulum membrane. The protein localises to the cell membrane. Functionally, cholesterol-binding protein involved in the redistribution of cholesterol from lipid droplets to the endoplasmic reticulum. Required to meet cholesterol demands during erythropoietic differentiation. May play a role in transport processes at the plasma membrane of erythrocytes, including regulating VDAC-mediated ATP export, and import of the heme precursors protoporphyrin IX and 5-aminolevulinic acid. The sequence is that of Translocator protein 2 (Tspo2) from Mus musculus (Mouse).